A 181-amino-acid polypeptide reads, in one-letter code: Large ribosomal subunit protein uL5 (181 aa).

Belongs to the universal ribosomal protein uL5 family. Part of the 50S ribosomal subunit; part of the 5S rRNA/L5/L18/L25 subcomplex. Contacts the 5S rRNA and the P site tRNA. Forms a bridge to the 30S subunit in the 70S ribosome.

This is one of the proteins that bind and probably mediate the attachment of the 5S RNA into the large ribosomal subunit, where it forms part of the central protuberance. In the 70S ribosome it contacts protein S13 of the 30S subunit (bridge B1b), connecting the 2 subunits; this bridge is implicated in subunit movement. Contacts the P site tRNA; the 5S rRNA and some of its associated proteins might help stabilize positioning of ribosome-bound tRNAs. This is Large ribosomal subunit protein uL5 from Campylobacter lari (strain RM2100 / D67 / ATCC BAA-1060).